The chain runs to 334 residues: Geranylgeranyl pyrophosphate synthase idtG (334 aa).

Residues Lys-49, Arg-52, and His-81 each coordinate isopentenyl diphosphate. Mg(2+) is bound by residues Asp-88 and Asp-92. Arg-97 lines the dimethylallyl diphosphate pocket. Arg-98 is an isopentenyl diphosphate binding site. Dimethylallyl diphosphate contacts are provided by Lys-175, Thr-176, and Gln-209. Residue Asp-212 participates in Mg(2+) binding. Residues Asn-216, Lys-226, and Lys-236 each coordinate dimethylallyl diphosphate.

Belongs to the FPP/GGPP synthase family. Requires Mg(2+) as cofactor.

It catalyses the reaction isopentenyl diphosphate + dimethylallyl diphosphate = (2E)-geranyl diphosphate + diphosphate. The catalysed reaction is isopentenyl diphosphate + (2E)-geranyl diphosphate = (2E,6E)-farnesyl diphosphate + diphosphate. It carries out the reaction isopentenyl diphosphate + (2E,6E)-farnesyl diphosphate = (2E,6E,10E)-geranylgeranyl diphosphate + diphosphate. It participates in secondary metabolite biosynthesis. Its function is as follows. Geranylgeranyl pyrophosphate synthase; part of the gene cluster that mediates the biosynthesis of paspalitrems, indole-diterpene (IDT) mycotoxins that are potent tremorgens in mammals. The geranylgeranyl diphosphate (GGPP) synthase idtG is proposed to catalyze the first step in IDT biosynthesis via catalysis of a series of iterative condensations of isopentenyl diphosphate (IPP) with dimethylallyl diphosphate (DMAPP), geranyl diphosphate (GPP), and farnesyl diphosphate (FPP), to form GGPP. Condensation of indole-3-glycerol phosphate with GGPP by the prenyltransferase idtC then forms 3-geranylgeranylindole (3-GGI). Epoxidation of the two terminal alkenes of the geranylgeranyl moiety by the FAD-dependent monooxygenase idtM, and cyclization by the terpene cyclase idtB then leads to the production of paspaline. The cytochrome P450 monooxygenase idtP then catalyzes oxidative elimination of the pendant methyl group at C-12 of paspaline and generates the C-10 ketone to yield 13-desoxypaxilline. The cytochrome P450 monooxygenase idtQ may catalyze the C-13 oxidation of 13-desoxypaxilline to afford paxilline. Considering that both paspalicine and paxilline were detected in C.paspali, idtQ also catalyzes the formation of paspalinine from 13-desoxypaxilline via paspalicine as an intermediate. Finally, the alpha-prenyltransferase idtF prenylates paspalinine at the C-20 or the C-21 positions to yield paspalitrems A and C, respectively. The hydroxylation of paspalitrem A at C-32 by a still unknown oxidase affords paspalitrem B. This is Geranylgeranyl pyrophosphate synthase idtG from Claviceps paspali (Rye ergot fungus).